The chain runs to 623 residues: Leucine-rich repeat, immunoglobulin-like domain and transmembrane domain-containing protein 1 (623 aa).

A signal peptide spans 1 to 21; sequence MWVALGMLWLLALGGPHQAWS. The LRRNT domain occupies 22–59; that stretch reads FCPSQCSCSLHILSDGSKARTVVCSDPDLTLPPASIPP. Over 22-526 the chain is Lumenal; it reads FCPSQCSCSL…EVVDAEGTQR (505 aa). LRR repeat units follow at residues 60–81, 84–105, 108–128, 132–153, and 156–177; these read DTCK…TFRP, RLEQ…MLRG, RLRE…AALK, QLQL…AVHF, and NLTF…LLDT. An N-linked (GlcNAc...) asparagine glycan is attached at Asn156. Residues 201–253 form the LRRCT domain; sequence NPWVCDCRLYDLVHLLDGWASNLIFIEARLRCGSPRSLAGVAFSQLELRKCQS. Positions 266-332 constitute an Ig-like C2-type domain; it reads PLGSTVLLRC…SGDYICQAKN (67 aa). The cysteines at positions 275 and 328 are disulfide-linked. 2 N-linked (GlcNAc...) asparagine glycosylation sites follow: Asn296 and Asn455. A Fibronectin type-III domain is found at 430-518; sequence MVRSLKVVGD…QCVIFSTDEV (89 aa). One copy of the LRR 6 repeat lies at 525-548; that stretch reads QRLINMVVISVAAIIALPPTLLVC. The helical transmembrane segment at 527–547 threads the bilayer; the sequence is LINMVVISVAAIIALPPTLLV. At 548–623 the chain is on the cytoplasmic side; sequence CCGALRRRCH…GGRRINEYFC (76 aa).

In terms of assembly, homodimer. Interacts with LRIT2; may form a heterodimer with LRIT2. Interacts (via its N-terminal extracellular domain) with metabotropic glutamate receptor GRM6. Interacts (via its extreme C-terminus) with the scaffold protein FRMPD2 (via the third PDZ domain); the interaction leads to their colocalization in photoreceptor synapses. As to expression, retina, outer segments of photoreceptor cells.

The protein resides in the endoplasmic reticulum membrane. The protein localises to the cell projection. It is found in the dendrite. In terms of biological role, photoreceptor synaptic protein essential for normal vision. Involved in synapse formation in cone photoreceptor cells. This chain is Leucine-rich repeat, immunoglobulin-like domain and transmembrane domain-containing protein 1 (Lrit1), found in Rattus norvegicus (Rat).